Reading from the N-terminus, the 231-residue chain is Quercetin 2,3-dioxygenase (231 aa).

Histidine 57, histidine 59, histidine 101, and glutamate 103 together coordinate a divalent metal cation.

Belongs to the pirin family. Requires Zn(2+) as cofactor. It depends on Co(2+) as a cofactor. Fe(2+) serves as cofactor.

The enzyme catalyses quercetin + O2 = 2-(3,4-dihydroxybenzoyloxy)-4,6-dihydroxybenzoate + CO. The protein operates within flavonoid metabolism; quercetin degradation. Has quercetin 2,3-dioxygenase activity in vitro. Its physiological role is unknown; however, may provide a mechanism that would avoid inhibition of key cellular proteins, such as DNA gyrase, by quercetin. This chain is Quercetin 2,3-dioxygenase (yhhW), found in Escherichia coli O157:H7.